We begin with the raw amino-acid sequence, 937 residues long: Protein Niban 1 (937 aa).

Residue Gly2 is the site of N-myristoyl glycine attachment. Residues Ser578, Ser581, Ser595, Ser601, and Ser646 each carry the phosphoserine modification. The span at Asp584 to Ser595 shows a compositional bias: polar residues. Disordered regions lie at residues Asp584–Arg710 and Ser724–Asn891. Over residues Ala640–Glu651 the composition is skewed to low complexity. Residues Val655–Leu681 are compositionally biased toward polar residues. Basic and acidic residues predominate over residues Glu688–Glu701. Phosphoserine occurs at positions 708 and 768. 2 stretches are compositionally biased toward polar residues: residues Pro802–Cys817 and Val855–Pro869.

The protein belongs to the Niban family. In terms of tissue distribution, detected in brain, lung, spleen and skeletal muscle. Expressed in small renal tumors but not in normal kidney.

The protein resides in the cytoplasm. It is found in the membrane. Functionally, regulates phosphorylation of a number of proteins involved in translation regulation including EIF2A, EIF4EBP1 and RPS6KB1. May be involved in the endoplasmic reticulum stress response. The polypeptide is Protein Niban 1 (Rattus norvegicus (Rat)).